The following is a 416-amino-acid chain: uncharacterized protein (416 aa).

The N-acetyltransferase domain occupies 3-150 (LDVRTITPSE…SVYRAGLDAR (148 aa)). Residues 83–85 (VTV) and 91–96 (RRGLLS) each bind acetyl-CoA. The active-site Proton donor is Tyr124. Phe416 serves as the catalytic Proton acceptor; via carboxylate.

Belongs to the acetyltransferase Eis family. Homohexamer; trimer of dimers.

This is an uncharacterized protein from Streptomyces griseus subsp. griseus (strain JCM 4626 / CBS 651.72 / NBRC 13350 / KCC S-0626 / ISP 5235).